The sequence spans 321 residues: Isopenicillin N synthase (321 aa).

A disordered region spans residues 1–42 (MPVLMPSADVPTIDISPQLFGTDPTPRRTSRGRSTRPARGSG). 3 residues coordinate isopenicillin N: Arg-87, Tyr-91, and Tyr-188. Residues Arg-87, Tyr-91, Tyr-188, His-213, and Asp-215 each coordinate N-[(5S)-5-amino-5-carboxypentanoyl]-L-cysteinyl-D-valine. Positions 179 to 287 (TLSAVSMIRY…RLSLPFFLHA (109 aa)) constitute a Fe2OG dioxygenase domain. Residues His-213, Asp-215, and His-269 each contribute to the Fe(2+) site. Arg-278 lines the 2-oxoglutarate pocket. Ser-280 contributes to the isopenicillin N binding site. An N-[(5S)-5-amino-5-carboxypentanoyl]-L-cysteinyl-D-valine-binding site is contributed by Ser-280.

This sequence belongs to the iron/ascorbate-dependent oxidoreductase family. The cofactor is Fe cation. It depends on L-ascorbate as a cofactor.

It catalyses the reaction N-[(5S)-5-amino-5-carboxypentanoyl]-L-cysteinyl-D-valine + O2 = isopenicillin N + 2 H2O. It functions in the pathway antibiotic biosynthesis; penicillin G biosynthesis; penicillin G from L-alpha-aminoadipate and L-cysteine and L-valine: step 2/3. Removes, in the presence of oxygen, 4 hydrogen atoms from delta-L-(alpha-aminoadipyl)-L-cysteinyl-D-valine (ACV) to form the azetidinone and thiazolidine rings of isopenicillin. This Streptantibioticus cattleyicolor (Streptomyces cattleya) protein is Isopenicillin N synthase (pcbC).